The primary structure comprises 501 residues: Lycopene beta cyclase, chloroplastic (501 aa).

Residues 1–48 constitute a chloroplast transit peptide; that stretch reads MDTLLKTPNKLDFFIPQFHGFERLCSNNPYHSRVRLGVKKRAIKIVSS. V49 carries the post-translational modification N-acetylvaline. 85-113 serves as a coordination point for NAD(+); that stretch reads LAIVGGGPAGLAVAQQVSEAGLSVCSIDP.

It belongs to the lycopene cyclase family.

Its subcellular location is the plastid. It localises to the chloroplast. The catalysed reaction is a carotenoid psi-end group = a carotenoid beta-end derivative. It participates in carotenoid biosynthesis; beta-carotene biosynthesis. Its pathway is carotenoid biosynthesis; beta-zeacarotene biosynthesis. Involved in carotenoid biosynthesis. Catalyzes the double cyclization reaction which converts lycopene to beta-carotene and neurosporene to beta-zeacarotene. Major lycopene beta-cyclase that does not seem to be involved in neoxanthin synthesis. Involved in salt tolerance improvement by increasing synthesis of carotenoids, which impairs reactive oxygen species (ROS) and protects the photosynthetic system under salt stress. The chain is Lycopene beta cyclase, chloroplastic from Arabidopsis thaliana (Mouse-ear cress).